Reading from the N-terminus, the 657-residue chain is LIM and SH3 domain protein Lasp (657 aa).

The 61-residue stretch at 3–63 (KTCARCQKVV…EAHIPKAKAT (61 aa)) folds into the LIM zinc-binding domain. Nebulin repeat units lie at residues 64 to 95 (AIAD…KAKG) and 96 to 130 (KFTQ…KKAA). Disordered regions lie at residues 130 to 151 (AMEK…EYFS), 164 to 223 (PTAS…PIQH), 235 to 257 (YQQL…QLHD), 294 to 318 (LYPT…QQQA), 332 to 415 (NSHH…SAAS), and 460 to 528 (KQHA…PKRI). A compositionally biased stretch (polar residues) spans 140 to 150 (VSDSSNESEYF). Composition is skewed to low complexity over residues 172–215 (AATT…QQQT) and 236–254 (QQLQ…QQQQ). Residues 332–341 (NSHHPSGNSV) show a composition bias toward polar residues. Over residues 342–357 (DQYDQPQQQQHQPQQQ) the composition is skewed to low complexity. Residues 358-370 (STNPTLVAAQQQQ) show a composition bias toward polar residues. Residues 371-403 (SHHSLLNNNASNGGISHSHHSNINNNGHGSQNQ) are compositionally biased toward low complexity. Positions 460-475 (KQHASNGHMPNQQQQH) are enriched in polar residues. Residues serine 505 and serine 530 each carry the phosphoserine modification. The tract at residues 548–592 (EQAHQQQKHQQYYQQVQMMQQQEHPPQQQQMRQQPSYSSLQEKQS) is disordered. The segment covering 549 to 586 (QAHQQQKHQQYYQQVQMMQQQEHPPQQQQMRQQPSYSS) has biased composition (low complexity). The region spanning 596-657 (TAMRVYRAIY…PANYVEQAVI (62 aa)) is the SH3 domain.

As to quaternary structure, interacts with osk.

This chain is LIM and SH3 domain protein Lasp, found in Drosophila melanogaster (Fruit fly).